We begin with the raw amino-acid sequence, 155 residues long: uncharacterized protein (155 aa).

Residues 1-21 form the signal peptide; it reads MFFIVAAGFVIAALIAAIGMA. The segment at 35-155 is disordered; sequence GQTKPATTRP…PVYRPPEEMV (121 aa). Polar residues predominate over residues 118–128; the sequence is ATASNTPQNEA.

This is an uncharacterized protein from Schizosaccharomyces pombe (strain 972 / ATCC 24843) (Fission yeast).